The following is a 168-amino-acid chain: tRNA (cytidine(56)-2'-O)-methyltransferase (168 aa).

S-adenosyl-L-methionine-binding positions include Leu79 and 104–108; that span reads GAEKV.

The protein belongs to the aTrm56 family. In terms of assembly, homodimer.

It localises to the cytoplasm. The catalysed reaction is cytidine(56) in tRNA + S-adenosyl-L-methionine = 2'-O-methylcytidine(56) in tRNA + S-adenosyl-L-homocysteine + H(+). Its function is as follows. Specifically catalyzes the AdoMet-dependent 2'-O-ribose methylation of cytidine at position 56 in tRNAs. This Archaeoglobus fulgidus (strain ATCC 49558 / DSM 4304 / JCM 9628 / NBRC 100126 / VC-16) protein is tRNA (cytidine(56)-2'-O)-methyltransferase.